A 123-amino-acid chain; its full sequence is Thioredoxin H-type (123 aa).

The Thioredoxin domain maps to 2–119; that stretch reads AATAELIPAG…IEAKLLKHSQ (118 aa). The cysteines at positions 45 and 48 are disulfide-linked.

Belongs to the thioredoxin family. Plant H-type subfamily.

It is found in the cytoplasm. Its function is as follows. Participates in various redox reactions through the reversible oxidation of the active center dithiol to a disulfide. The H form is known to activate a number of cytosolic enzymes. The polypeptide is Thioredoxin H-type (PEC-2) (Brassica campestris (Field mustard)).